The following is an 873-amino-acid chain: DNA mismatch repair protein MutS (873 aa).

625–632 (GPNMGGKS) lines the ATP pocket.

It belongs to the DNA mismatch repair MutS family.

Functionally, this protein is involved in the repair of mismatches in DNA. It is possible that it carries out the mismatch recognition step. This protein has a weak ATPase activity. The sequence is that of DNA mismatch repair protein MutS from Xanthomonas oryzae pv. oryzae (strain KACC10331 / KXO85).